The following is a 110-amino-acid chain: Nucleoid-associated protein Ent638_0951 (110 aa).

Belongs to the YbaB/EbfC family. In terms of assembly, homodimer.

It is found in the cytoplasm. Its subcellular location is the nucleoid. Functionally, binds to DNA and alters its conformation. May be involved in regulation of gene expression, nucleoid organization and DNA protection. The sequence is that of Nucleoid-associated protein Ent638_0951 from Enterobacter sp. (strain 638).